The sequence spans 878 residues: MTESFPSTSASSQSSARYDPIELETRWQKEWLRQGLDRTPVAETNQKRFYALSMFPYPSGKLHMGHVRNYVITDVIARVQRMRGDAVLHPMGWDAFGLPAENAAIARNVDPGDWTDQNIAQMRAQLDRLGLSIDWDRQQATCHQDYYRWTQWLFLELFAGGLAYQKEATVNWDPVDKTVLANEQVDGEGRSWRSGALVEQRQLKQWFLRITDYADALIDDLDELTGWPERVRTMQANWIGRSHGAEIKFRVAGVANSIITVFTTRPDTLHGASYVVLAPEHPLVESLTSPEQRLAVTAFCDLISQLSVKDRTAEDQPKRGVPIGAQVINPVNGESLPVWIADYVLADYGSGAVMGVPAHDERDFIFARSHELPIRIVVQLPDTDEHHNDGQAWTGAGVLVNSGAFDGLSTEEAKVAITTHGASEGWAQSKVQYRLRDWLISRQRYWGCPIPIIHCASCGIVPVPQEDLPVTLPRDIDLSGKGGSPIAQEQAWVEVKCPICGEKAHRETDTMDTFMCSSWYYLRFADPLNSQRPFDKDIVDEWLPVDQYVGGIEHAILHLLYARFFTKALHDRNLIGFKEPFNRLLTQGMVQGLTYRNAKNGSYISPELVSDDSDPRDPESGDRLEVLFEKMSKSKYNGVDPAVVIDRYGADTARMFILFKAPPEKDLEWDDADVEGQFRFLQRLIRLIDSFAWPKTDGENASISSANLIIDSADLSEEEINMRRATHKAIEAITEDLSGDIQLNTAISELMKLSNSLSGKLDKVRNEVAAEALSVLVRLMAPFAPHLAEEFWLKLHGHGSIHQQSWPVIDPSALVLETIELVIQVKGKVRGKIQVPANADKKTLEELALNSDIAVKWLEGQSPRRIIIVPGKLVNLVP.

The 'HIGH' region motif lies at 56–66 (PYPSGKLHMGH). Positions 630–634 (KMSKS) match the 'KMSKS' region motif. Lys633 is a binding site for ATP.

It belongs to the class-I aminoacyl-tRNA synthetase family.

It localises to the cytoplasm. It carries out the reaction tRNA(Leu) + L-leucine + ATP = L-leucyl-tRNA(Leu) + AMP + diphosphate. The protein is Leucine--tRNA ligase of Prochlorococcus marinus (strain MIT 9313).